The chain runs to 314 residues: Nodulation protein D 1 (314 aa).

One can recognise an HTH lysR-type domain in the interval 6 to 63 (LDLNLLVVLDALLTERTLTAAASSINLSQPAMSAAVARLRDYFNDELFTTSGRERVLT). Residues 23–42 (LTAAASSINLSQPAMSAAVA) constitute a DNA-binding region (H-T-H motif).

This sequence belongs to the LysR transcriptional regulatory family.

Its function is as follows. NodD regulates the expression of the nodABCFE genes which encode other nodulation proteins. NodD is also a negative regulator of its own expression. Binds flavenoids as inducers. This is Nodulation protein D 1 (nodD1) from Mesorhizobium japonicum (strain LMG 29417 / CECT 9101 / MAFF 303099) (Mesorhizobium loti (strain MAFF 303099)).